The chain runs to 712 residues: DNA topoisomerase 3 (712 aa).

One can recognise a Toprim domain in the interval 2–135 (KSLIIAEKPS…TKRLWISSVT (134 aa)). 2 residues coordinate Mg(2+): Glu-8 and Asp-104. The Topo IA-type catalytic domain occupies 152-581 (FNNLYHAALA…EMKAFTNQVV (430 aa)). An interaction with DNA region spans residues 186–191 (SLGRVQ). Tyr-305 acts as the O-(5'-phospho-DNA)-tyrosine intermediate in catalysis.

The protein belongs to the type IA topoisomerase family. Mg(2+) is required as a cofactor.

The catalysed reaction is ATP-independent breakage of single-stranded DNA, followed by passage and rejoining.. Releases the supercoiling and torsional tension of DNA, which is introduced during the DNA replication and transcription, by transiently cleaving and rejoining one strand of the DNA duplex. Introduces a single-strand break via transesterification at a target site in duplex DNA. The scissile phosphodiester is attacked by the catalytic tyrosine of the enzyme, resulting in the formation of a DNA-(5'-phosphotyrosyl)-enzyme intermediate and the expulsion of a 3'-OH DNA strand. The free DNA strand then undergoes passage around the unbroken strand, thus removing DNA supercoils. Finally, in the religation step, the DNA 3'-OH attacks the covalent intermediate to expel the active-site tyrosine and restore the DNA phosphodiester backbone. The protein is DNA topoisomerase 3 of Staphylococcus saprophyticus subsp. saprophyticus (strain ATCC 15305 / DSM 20229 / NCIMB 8711 / NCTC 7292 / S-41).